The sequence spans 241 residues: Carboxy-S-adenosyl-L-methionine synthase (241 aa).

S-adenosyl-L-methionine contacts are provided by residues tyrosine 38, 63–65 (GCS), 88–89 (DN), 116–117 (DI), asparagine 131, and arginine 198.

This sequence belongs to the class I-like SAM-binding methyltransferase superfamily. Cx-SAM synthase family. Homodimer.

It catalyses the reaction prephenate + S-adenosyl-L-methionine = carboxy-S-adenosyl-L-methionine + 3-phenylpyruvate + H2O. Functionally, catalyzes the conversion of S-adenosyl-L-methionine (SAM) to carboxy-S-adenosyl-L-methionine (Cx-SAM). The sequence is that of Carboxy-S-adenosyl-L-methionine synthase from Pseudoalteromonas translucida (strain TAC 125).